The chain runs to 241 residues: ATP synthase subunit a (241 aa).

Helical transmembrane passes span 30–50 (GQVFLTSWILLGALLVFISLG), 91–111 (FIGTLFLFVFVSNWGGALIPW), 128–148 (INTTIALALLVSLSYFYAGLS), 193–213 (LVVGVLVFLVPLILPIPVMFL), and 214–234 (GLFTSAIQALIFATLAAYYIG).

Belongs to the ATPase A chain family. F-type ATPases have 2 components, CF(1) - the catalytic core - and CF(0) - the membrane proton channel. CF(1) has five subunits: alpha(3), beta(3), gamma(1), delta(1), epsilon(1). CF(0) has four main subunits: a, b, b' and c.

It is found in the cellular thylakoid membrane. Its function is as follows. Key component of the proton channel; it plays a direct role in the translocation of protons across the membrane. The protein is ATP synthase subunit a of Prochlorococcus marinus (strain MIT 9301).